The chain runs to 324 residues: tRNA N6-adenosine threonylcarbamoyltransferase (324 aa).

Fe cation contacts are provided by H107, H111, and Y128. Residues 128 to 132, D160, G173, E177, and N256 contribute to the substrate site; that span reads YVSGG. Position 284 (D284) interacts with Fe cation.

The protein belongs to the KAE1 / TsaD family. As to quaternary structure, monomer. Component of the KEOPS complex that consists of Kae1, Bud32, Cgi121 and Pcc1; the whole complex dimerizes. Requires Fe(2+) as cofactor.

The protein resides in the cytoplasm. It catalyses the reaction L-threonylcarbamoyladenylate + adenosine(37) in tRNA = N(6)-L-threonylcarbamoyladenosine(37) in tRNA + AMP + H(+). Required for the formation of a threonylcarbamoyl group on adenosine at position 37 (t(6)A37) in tRNAs that read codons beginning with adenine. Is a component of the KEOPS complex that is probably involved in the transfer of the threonylcarbamoyl moiety of threonylcarbamoyl-AMP (TC-AMP) to the N6 group of A37. Kae1 likely plays a direct catalytic role in this reaction, but requires other protein(s) of the complex to fulfill this activity. This is tRNA N6-adenosine threonylcarbamoyltransferase from Methanothrix thermoacetophila (strain DSM 6194 / JCM 14653 / NBRC 101360 / PT) (Methanosaeta thermophila).